A 442-amino-acid polypeptide reads, in one-letter code: Trigger factor (442 aa).

In terms of domain architecture, PPIase FKBP-type spans 163–248 (YDRVTINYCI…IIKIEKKQEL (86 aa)).

This sequence belongs to the FKBP-type PPIase family. Tig subfamily.

The protein localises to the cytoplasm. It catalyses the reaction [protein]-peptidylproline (omega=180) = [protein]-peptidylproline (omega=0). In terms of biological role, involved in protein export. Acts as a chaperone by maintaining the newly synthesized protein in an open conformation. Functions as a peptidyl-prolyl cis-trans isomerase. The chain is Trigger factor (tig) from Buchnera aphidicola subsp. Acyrthosiphon pisum (strain APS) (Acyrthosiphon pisum symbiotic bacterium).